The chain runs to 71 residues: DNA-directed RNA polymerase subunit omega (71 aa).

It belongs to the RNA polymerase subunit omega family. As to quaternary structure, the RNAP catalytic core consists of 2 alpha, 1 beta/beta' and 1 omega subunit. When a sigma factor is associated with the core the holoenzyme is formed, which can initiate transcription.

The enzyme catalyses RNA(n) + a ribonucleoside 5'-triphosphate = RNA(n+1) + diphosphate. Functionally, promotes RNA polymerase assembly. Latches the N- and C-terminal regions of the beta' subunit thereby facilitating its interaction with the beta and alpha subunits. In Wolinella succinogenes (strain ATCC 29543 / DSM 1740 / CCUG 13145 / JCM 31913 / LMG 7466 / NCTC 11488 / FDC 602W) (Vibrio succinogenes), this protein is DNA-directed RNA polymerase subunit omega.